Here is a 425-residue protein sequence, read N- to C-terminus: Histidine--tRNA ligase (425 aa).

The protein belongs to the class-II aminoacyl-tRNA synthetase family. In terms of assembly, homodimer.

Its subcellular location is the cytoplasm. The enzyme catalyses tRNA(His) + L-histidine + ATP = L-histidyl-tRNA(His) + AMP + diphosphate + H(+). The sequence is that of Histidine--tRNA ligase from Listeria innocua serovar 6a (strain ATCC BAA-680 / CLIP 11262).